The chain runs to 695 residues: Polyribonucleotide nucleotidyltransferase (695 aa).

The Mg(2+) site is built by Asp488 and Asp494. A KH domain is found at 554–613 (PKTAVIKIQTDKIRDLIGKGGETIKGIISTSSASVDVDDNGNVNIFSNDQKSFDTAMQMV). The S1 motif domain maps to 623 to 690 (GKVYTGKVVK…DRGRIKLSRK (68 aa)).

It belongs to the polyribonucleotide nucleotidyltransferase family. In terms of assembly, component of the RNA degradosome, which is a multiprotein complex involved in RNA processing and mRNA degradation. Mg(2+) is required as a cofactor.

The protein localises to the cytoplasm. It carries out the reaction RNA(n+1) + phosphate = RNA(n) + a ribonucleoside 5'-diphosphate. In terms of biological role, involved in mRNA degradation. Catalyzes the phosphorolysis of single-stranded polyribonucleotides processively in the 3'- to 5'-direction. The polypeptide is Polyribonucleotide nucleotidyltransferase (Ruthia magnifica subsp. Calyptogena magnifica).